The sequence spans 886 residues: DNA mismatch repair protein MutS (886 aa).

641-648 (GPNMAGKS) provides a ligand contact to ATP.

The protein belongs to the DNA mismatch repair MutS family.

Its function is as follows. This protein is involved in the repair of mismatches in DNA. It is possible that it carries out the mismatch recognition step. This protein has a weak ATPase activity. This is DNA mismatch repair protein MutS from Rickettsia felis (strain ATCC VR-1525 / URRWXCal2) (Rickettsia azadi).